We begin with the raw amino-acid sequence, 38 residues long: Photosystem II reaction center protein L (38 aa).

A helical transmembrane segment spans residues 17 to 37; the sequence is SLYWGLLLIFVLAVLFSSYIF.

The protein belongs to the PsbL family. In terms of assembly, PSII is composed of 1 copy each of membrane proteins PsbA, PsbB, PsbC, PsbD, PsbE, PsbF, PsbH, PsbI, PsbJ, PsbK, PsbL, PsbM, PsbT, PsbX, PsbY, PsbZ, Psb30/Ycf12, at least 3 peripheral proteins of the oxygen-evolving complex and a large number of cofactors. It forms dimeric complexes.

The protein resides in the plastid. The protein localises to the chloroplast thylakoid membrane. Functionally, one of the components of the core complex of photosystem II (PSII). PSII is a light-driven water:plastoquinone oxidoreductase that uses light energy to abstract electrons from H(2)O, generating O(2) and a proton gradient subsequently used for ATP formation. It consists of a core antenna complex that captures photons, and an electron transfer chain that converts photonic excitation into a charge separation. This subunit is found at the monomer-monomer interface and is required for correct PSII assembly and/or dimerization. The polypeptide is Photosystem II reaction center protein L (Oltmannsiellopsis viridis (Marine flagellate)).